A 268-amino-acid chain; its full sequence is MKFVSFNINGLRARPHQLEAIVEKHQPDVIGLQETKVHDEMFPLEEVAKLGYNVFYHGQKGHYGVALLTKATPISVRRGFPDDGEEAQRRIIMAEIPSPLGNITVINGYFPQGESRDHPLKFPAKAQFYQNLQNYLETELKCDNPVLIMGDMNISPTDLDIGIGEENRKRWLRTGKCSFLPEEREWMSRLLKWGLVDTFRQANPQTMDKFSWFDYRSKGFVDNRGLRIDLLLASAPLAERCAETGIDYDIRSMEKPSDHAPVWATFRV.

E34 contributes to the Mg(2+) binding site. Residue Y109 is part of the active site. Residues D151, N153, and D258 each contribute to the Mg(2+) site. The Proton donor/acceptor role is filled by D151.

It belongs to the DNA repair enzymes AP/ExoA family. Monomer. Mg(2+) is required as a cofactor. Mn(2+) serves as cofactor.

It carries out the reaction Exonucleolytic cleavage in the 3'- to 5'-direction to yield nucleoside 5'-phosphates.. Its function is as follows. Major apurinic-apyrimidinic endonuclease of E.coli. It removes the damaged DNA at cytosines and guanines by cleaving on the 3'-side of the AP site by a beta-elimination reaction. It exhibits 3'-5'-exonuclease, 3'-phosphomonoesterase, 3'-repair diesterase and ribonuclease H activities. This is Exodeoxyribonuclease III (xthA) from Salmonella typhi.